The primary structure comprises 179 residues: UPF0303 protein YBR137W (179 aa).

It belongs to the UPF0303 family.

Its subcellular location is the cytoplasm. The chain is UPF0303 protein YBR137W from Saccharomyces cerevisiae (strain ATCC 204508 / S288c) (Baker's yeast).